The primary structure comprises 85 residues: Anti-neuroexcitation peptide 2 (85 aa).

A signal peptide spans 1–21; that stretch reads MKLSLLLVISASMLIDGLVNA. Residues 22–82 enclose the LCN-type CS-alpha/beta domain; it reads DGYIRGSNGC…TWKSESNTCG (61 aa). Intrachain disulfides connect C31-C81, C35-C56, C42-C63, and C46-C65.

The protein belongs to the long (4 C-C) scorpion toxin superfamily. Sodium channel inhibitor family. Beta subfamily. As to expression, expressed by the venom gland.

It is found in the secreted. Functionally, binds to sodium channels (Nav) and inhibits them. Recombinant ANEP delays the convulsion seizure of insect models by 18% and shows anti-neuroexcitatory activity. This is Anti-neuroexcitation peptide 2 from Olivierus martensii (Manchurian scorpion).